The chain runs to 154 residues: 3-hydroxyacyl-[acyl-carrier-protein] dehydratase FabZ (154 aa).

His-60 is an active-site residue.

This sequence belongs to the thioester dehydratase family. FabZ subfamily.

Its subcellular location is the cytoplasm. The enzyme catalyses a (3R)-hydroxyacyl-[ACP] = a (2E)-enoyl-[ACP] + H2O. In terms of biological role, involved in unsaturated fatty acids biosynthesis. Catalyzes the dehydration of short chain beta-hydroxyacyl-ACPs and long chain saturated and unsaturated beta-hydroxyacyl-ACPs. The chain is 3-hydroxyacyl-[acyl-carrier-protein] dehydratase FabZ from Actinobacillus pleuropneumoniae serotype 5b (strain L20).